Reading from the N-terminus, the 129-residue chain is L-ectoine synthase (129 aa).

Belongs to the ectoine synthase family.

It carries out the reaction (2S)-4-acetamido-2-aminobutanoate = L-ectoine + H2O. The protein operates within amine and polyamine biosynthesis; ectoine biosynthesis; L-ectoine from L-aspartate 4-semialdehyde: step 3/3. Its function is as follows. Catalyzes the circularization of gamma-N-acetyl-alpha,gamma-diaminobutyric acid (ADABA) to ectoine (1,4,5,6-tetrahydro-2-methyl-4-pyrimidine carboxylic acid), which is an excellent osmoprotectant. This chain is L-ectoine synthase, found in Mycobacterium sp. (strain KMS).